The chain runs to 285 residues: RNA exonuclease 4 (285 aa).

Polar residues predominate over residues 1 to 14 (MAKLSQNWKKLSSK). Positions 1-35 (MAKLSQNWKKLSSKIQDKPKNGSVKKPTLKGKISK) are disordered. In terms of domain architecture, Exonuclease spans 116 to 267 (YVAIDCEFVG…EDARATMLLF (152 aa)).

It belongs to the REXO4 family.

The protein resides in the nucleus. Exoribonuclease involved in ribosome biosynthesis. Involved in the processing of ITS1, the internal transcribed spacer localized between the 18S and 5.8S rRNAs. The protein is RNA exonuclease 4 (REX4) of Candida albicans (strain SC5314 / ATCC MYA-2876) (Yeast).